Here is a 528-residue protein sequence, read N- to C-terminus: T-complex protein 1 subunit gamma (528 aa).

S250 is subject to Phosphoserine. C364 and C370 are disulfide-bonded.

Belongs to the TCP-1 chaperonin family. In terms of assembly, heterooligomeric complex of about 850 to 900 kDa that forms two stacked rings, 12 to 16 nm in diameter.

The protein resides in the cytoplasm. Its function is as follows. Molecular chaperone; assists the folding of proteins upon ATP hydrolysis. Known to play a role, in vitro, in the folding of actin and tubulin. The chain is T-complex protein 1 subunit gamma (cct3) from Schizosaccharomyces pombe (strain 972 / ATCC 24843) (Fission yeast).